Here is a 252-residue protein sequence, read N- to C-terminus: UPF0736 protein OB1207 (252 aa).

The protein belongs to the UPF0736 family.

This is UPF0736 protein OB1207 from Oceanobacillus iheyensis (strain DSM 14371 / CIP 107618 / JCM 11309 / KCTC 3954 / HTE831).